Here is a 108-residue protein sequence, read N- to C-terminus: UPF0102 protein WS0451 (108 aa).

It belongs to the UPF0102 family.

This is UPF0102 protein WS0451 from Wolinella succinogenes (strain ATCC 29543 / DSM 1740 / CCUG 13145 / JCM 31913 / LMG 7466 / NCTC 11488 / FDC 602W) (Vibrio succinogenes).